Consider the following 130-residue polypeptide: Protein ApaG (130 aa).

An ApaG domain is found at 3-127 (KAETRGISVT…FSLDVPHVRR (125 aa)).

This is Protein ApaG from Methylobacterium sp. (strain 4-46).